The following is a 463-amino-acid chain: ATP synthase subunit beta (463 aa).

151-158 provides a ligand contact to ATP; sequence GGAGVGKT.

It belongs to the ATPase alpha/beta chains family. In terms of assembly, F-type ATPases have 2 components, CF(1) - the catalytic core - and CF(0) - the membrane proton channel. CF(1) has five subunits: alpha(3), beta(3), gamma(1), delta(1), epsilon(1). CF(0) has three main subunits: a(1), b(2) and c(9-12). The alpha and beta chains form an alternating ring which encloses part of the gamma chain. CF(1) is attached to CF(0) by a central stalk formed by the gamma and epsilon chains, while a peripheral stalk is formed by the delta and b chains.

It is found in the cell membrane. The catalysed reaction is ATP + H2O + 4 H(+)(in) = ADP + phosphate + 5 H(+)(out). Functionally, produces ATP from ADP in the presence of a proton gradient across the membrane. The catalytic sites are hosted primarily by the beta subunits. The chain is ATP synthase subunit beta from Clostridium botulinum (strain Loch Maree / Type A3).